The sequence spans 296 residues: 5,10-methylenetetrahydrofolate reductase (296 aa).

Glu28 functions as the Proton donor/acceptor in the catalytic mechanism. NADH is bound at residue Thr59. The FAD site is built by Tyr60, Ala62, His88, Arg118, Gly119, Asp120, Ala132, Tyr152, His156, Ala159, Asp165, Asn168, Arg171, and Lys172. Residue Asp120 participates in (6S)-5-methyl-5,6,7,8-tetrahydrofolate binding. NADH is bound at residue Gln183. (6S)-5-methyl-5,6,7,8-tetrahydrofolate contacts are provided by Gln183, Gln219, and Arg279.

Belongs to the methylenetetrahydrofolate reductase family. Homotetramer. The cofactor is FAD.

The catalysed reaction is (6S)-5-methyl-5,6,7,8-tetrahydrofolate + NAD(+) = (6R)-5,10-methylene-5,6,7,8-tetrahydrofolate + NADH + H(+). It functions in the pathway one-carbon metabolism; tetrahydrofolate interconversion. Its pathway is amino-acid biosynthesis; L-methionine biosynthesis via de novo pathway. Functionally, catalyzes the NADH-dependent reduction of 5,10-methylenetetrahydrofolate to 5-methyltetrahydrofolate. Is required to provide the methyl group necessary for methionine synthetase to convert homocysteine to methionine; the methyl group is given by 5-methyltetrahydrofolate. Can also use NADPH as the reductant, but much less effectively than NADH. The chain is 5,10-methylenetetrahydrofolate reductase from Escherichia coli (strain K12).